We begin with the raw amino-acid sequence, 189 residues long: Chitin synthase 1 (189 aa).

It belongs to the chitin synthase family. Class I subfamily.

The protein resides in the cell membrane. The catalysed reaction is [(1-&gt;4)-N-acetyl-beta-D-glucosaminyl](n) + UDP-N-acetyl-alpha-D-glucosamine = [(1-&gt;4)-N-acetyl-beta-D-glucosaminyl](n+1) + UDP + H(+). Its function is as follows. Polymerizes chitin, a structural polymer of the cell wall and septum, by transferring the sugar moiety of UDP-GlcNAc to the non-reducing end of the growing chitin polymer. In Aspergillus niger, this protein is Chitin synthase 1 (chs1).